Reading from the N-terminus, the 419-residue chain is Nodulation protein NoeE (419 aa).

Its function is as follows. Required for the formation of sulfated nod factor. Proposed to transfer activated sulfate (PAPS) to the fucose of the nod factor. The sequence is that of Nodulation protein NoeE (noeE) from Sinorhizobium fredii (strain NBRC 101917 / NGR234).